The following is a 67-amino-acid chain: MDNYSVQNFYNNDRKPLKPTTLHDGNIKKSVYEDVTYIRKLMCKEIMPGEHDHKFYNYGYNKENKYK.

It belongs to the baculoviridae 8 kDa protein family.

This is an uncharacterized protein from Autographa californica nuclear polyhedrosis virus (AcMNPV).